The following is a 308-amino-acid chain: 2-methylisocitrate lyase (308 aa).

54-56 (SGG) is a substrate binding site. Mg(2+)-binding residues include D94 and D96. Substrate is bound by residues 131–132 (CG), R166, E196, 224–226 (NIT), R255, and R284.

The protein belongs to the isocitrate lyase/PEP mutase superfamily. Methylisocitrate lyase family. Homotetramer; dimer of dimers. It depends on Mg(2+) as a cofactor.

It carries out the reaction (2S,3R)-3-hydroxybutane-1,2,3-tricarboxylate = pyruvate + succinate. The protein operates within organic acid metabolism; propanoate degradation. Involved in the catabolism of short chain fatty acids (SCFA) via the 2-methylcitrate cycle I (propionate degradation route). Catalyzes the thermodynamically favored C-C bond cleavage reaction of (2R,3S)-2-methylisocitrate to yield pyruvate and succinate via an alpha-carboxy-carbanion intermediate. The chain is 2-methylisocitrate lyase from Vibrio cholerae serotype O1 (strain ATCC 39315 / El Tor Inaba N16961).